A 95-amino-acid chain; its full sequence is MSYTITAQTRTEIGKGSSRRLRHAGKVPAVIYGAGKEPVSIVFDHKDIINAQANDDFYTSVVTIVLDGKEVGVRAQAMQRHAFKPIIEHVDFVYA.

This sequence belongs to the bacterial ribosomal protein bL25 family. As to quaternary structure, part of the 50S ribosomal subunit; part of the 5S rRNA/L5/L18/L25 subcomplex. Contacts the 5S rRNA. Binds to the 5S rRNA independently of L5 and L18.

In terms of biological role, this is one of the proteins that binds to the 5S RNA in the ribosome where it forms part of the central protuberance. In Shewanella oneidensis (strain ATCC 700550 / JCM 31522 / CIP 106686 / LMG 19005 / NCIMB 14063 / MR-1), this protein is Large ribosomal subunit protein bL25.